An 876-amino-acid polypeptide reads, in one-letter code: DNA mismatch repair protein MutS (876 aa).

Residue 628–635 participates in ATP binding; it reads GPNMAGKS.

This sequence belongs to the DNA mismatch repair MutS family.

Its function is as follows. This protein is involved in the repair of mismatches in DNA. It is possible that it carries out the mismatch recognition step. This protein has a weak ATPase activity. The sequence is that of DNA mismatch repair protein MutS from Chlorobaculum parvum (strain DSM 263 / NCIMB 8327) (Chlorobium vibrioforme subsp. thiosulfatophilum).